The primary structure comprises 145 residues: MKKSARRQSRELATQGLYQWLLSNAAPGEIDAQLRGALGYDKADKTLLDTILHGVIREHATLAEAISPSLDRPIDQLSPVERAVLLIATYELTHQIETPYRVIINEAVELAKTFGGSDGYKYVNGVLDKLAVKLRPAETQARRGA.

Belongs to the NusB family.

In terms of biological role, involved in transcription antitermination. Required for transcription of ribosomal RNA (rRNA) genes. Binds specifically to the boxA antiterminator sequence of the ribosomal RNA (rrn) operons. This is Transcription antitermination protein NusB from Burkholderia mallei (strain NCTC 10247).